The chain runs to 65 residues: Carboxypeptidase A inhibitor (65 aa).

It belongs to the protease inhibitor I44 family.

Its subcellular location is the secreted. Inhibits carboxypeptidase A. The polypeptide is Carboxypeptidase A inhibitor (Ascaris suum (Pig roundworm)).